A 415-amino-acid polypeptide reads, in one-letter code: Multidrug resistance protein MdtA (415 aa).

Residues 1-21 (MKGSYKSRWVIVIVVVIAAIA) form the signal peptide. 2 disordered regions span residues 32–59 (SRSAAPGATKQAQQSPAGGRRGMRSGPL) and 392–415 (EAQSATTSEEKATSREYAKKGARS). Positions 399 to 415 (SEEKATSREYAKKGARS) are enriched in basic and acidic residues.

This sequence belongs to the membrane fusion protein (MFP) (TC 8.A.1) family. Part of a tripartite efflux system composed of MdtA, MdtB and MdtC.

Its subcellular location is the cell inner membrane. In terms of biological role, the MdtABC tripartite complex confers resistance against novobiocin and deoxycholate. This is Multidrug resistance protein MdtA from Escherichia coli O17:K52:H18 (strain UMN026 / ExPEC).